Reading from the N-terminus, the 640-residue chain is PTS system mannitol-specific EIICBA component (640 aa).

In terms of domain architecture, PTS EIIC type-2 spans Leu12 to Val343. 6 helical membrane passes run Ile24–Asn45, Lys50–Tyr70, Ser134–Glu155, Val165–Lys185, Leu273–Ile292, and Val313–Leu334. Residues Arg379–Asn475 enclose the PTS EIIB type-2 domain. Cys385 functions as the Phosphocysteine intermediate; for EIIB activity in the catalytic mechanism. Position 385 is a phosphocysteine; by EIIA (Cys385). Residues Phe496–Lys638 form the PTS EIIA type-2 domain. Residue His556 is the Tele-phosphohistidine intermediate; for EIIA activity of the active site. At His556 the chain carries Phosphohistidine; by HPr.

In terms of assembly, homodimer. In terms of processing, an intramolecular phosphotransfer takes places between His-556 and Cys-385.

It localises to the cell inner membrane. It carries out the reaction D-mannitol(out) + N(pros)-phospho-L-histidyl-[protein] = D-mannitol 1-phosphate(in) + L-histidyl-[protein]. Its function is as follows. The phosphoenolpyruvate-dependent sugar phosphotransferase system (sugar PTS), a major carbohydrate active transport system, catalyzes the phosphorylation of incoming sugar substrates concomitantly with their translocation across the cell membrane. This system is involved in D-mannitol transport. In Buchnera aphidicola subsp. Baizongia pistaciae (strain Bp), this protein is PTS system mannitol-specific EIICBA component (mtlA).